Here is a 392-residue protein sequence, read N- to C-terminus: MSFLTLKDVDLKDKKVLVRVDFNVPVKDGKVTSKVRIEAAIPTIQYILDQGGAVILMSHLGRPTEGEYDSQFSLEPVAKALSEIINKPVKFAKDWLDGVDVKAGEIVMCENVRFNIGEKKSTDDLSKKIASLGDVFVMDAFATAHRAQASTYGVAKYIPVACAGILLTNEIQALEKALKSPKKPMAAIVGGSKVSTKLSVLNNLLDKVEILIVGGGIANTFIKAEGFDVGNSLYEQDLVAEATEILAKAKALGVNIPVPVDVRVAKEFSENAQAIIKKVSYVVADEMILDIGPESQKIIAELLKSANTILWNGPVGVFEFDNFAEGTKALSLAIAQSHAFSVAGGGDTIAAIEKFGIKDQVSYISTAGGAFLEFLEGKKLPAIEILKEKAIR.

Residues 21-23, Arg-36, 59-62, Arg-113, and Arg-146 each bind substrate; these read DFN and HLGR. ATP-binding positions include Lys-197, Glu-319, and 345–348; that span reads GGDT.

It belongs to the phosphoglycerate kinase family. In terms of assembly, monomer.

It localises to the cytoplasm. The enzyme catalyses (2R)-3-phosphoglycerate + ATP = (2R)-3-phospho-glyceroyl phosphate + ADP. The protein operates within carbohydrate degradation; glycolysis; pyruvate from D-glyceraldehyde 3-phosphate: step 2/5. In Francisella tularensis subsp. holarctica (strain FTNF002-00 / FTA), this protein is Phosphoglycerate kinase.